We begin with the raw amino-acid sequence, 60 residues long: Large ribosomal subunit protein uL30 (60 aa).

The protein belongs to the universal ribosomal protein uL30 family. Part of the 50S ribosomal subunit.

This Acidovorax ebreus (strain TPSY) (Diaphorobacter sp. (strain TPSY)) protein is Large ribosomal subunit protein uL30.